Reading from the N-terminus, the 294-residue chain is Acetaldehyde dehydrogenase (294 aa).

11 to 14 is a binding site for NAD(+); sequence SGNI. The Acyl-thioester intermediate role is filled by C126. NAD(+) is bound by residues 157-165 and N269; that span reads SAGPGTRAN.

Belongs to the acetaldehyde dehydrogenase family.

The enzyme catalyses acetaldehyde + NAD(+) + CoA = acetyl-CoA + NADH + H(+). This Geobacillus stearothermophilus (Bacillus stearothermophilus) protein is Acetaldehyde dehydrogenase (pheF).